The sequence spans 521 residues: Glutamyl-tRNA(Gln) amidotransferase subunit B, mitochondrial (521 aa).

Residues 1 to 22 constitute a mitochondrion transit peptide; it reads MIALLRWGIARPSAPLRWSRCF.

This sequence belongs to the GatB/GatE family. GatB subfamily. As to quaternary structure, subunit of the heterotrimeric GatCAB amidotransferase (AdT) complex, composed of A, B and C subunits.

It is found in the mitochondrion. It carries out the reaction L-glutamyl-tRNA(Gln) + L-glutamine + ATP + H2O = L-glutaminyl-tRNA(Gln) + L-glutamate + ADP + phosphate + H(+). Allows the formation of correctly charged Gln-tRNA(Gln) through the transamidation of misacylated Glu-tRNA(Gln) in the mitochondria. The reaction takes place in the presence of glutamine and ATP through an activated gamma-phospho-Glu-tRNA(Gln). This Cryptococcus neoformans var. neoformans serotype D (strain JEC21 / ATCC MYA-565) (Filobasidiella neoformans) protein is Glutamyl-tRNA(Gln) amidotransferase subunit B, mitochondrial.